The chain runs to 610 residues: UvrABC system protein C (610 aa).

The GIY-YIG domain occupies 16 to 94; that stretch reads SAPGVYRMYD…IKQYMPKYNV (79 aa). The UVR domain occupies 203–238; that stretch reads KQVISQLVAKMETAAIDMEYERAAQYRDQITALRRV.

The protein belongs to the UvrC family. As to quaternary structure, interacts with UvrB in an incision complex.

The protein localises to the cytoplasm. Functionally, the UvrABC repair system catalyzes the recognition and processing of DNA lesions. UvrC both incises the 5' and 3' sides of the lesion. The N-terminal half is responsible for the 3' incision and the C-terminal half is responsible for the 5' incision. This chain is UvrABC system protein C, found in Shewanella frigidimarina (strain NCIMB 400).